The following is a 299-amino-acid chain: ATP phosphoribosyltransferase (299 aa).

It belongs to the ATP phosphoribosyltransferase family. Long subfamily. Equilibrium between an active dimeric form, an inactive hexameric form and higher aggregates. Interconversion between the various forms is largely reversible and is influenced by the natural substrates and inhibitors of the enzyme. Requires Mg(2+) as cofactor.

It localises to the cytoplasm. It catalyses the reaction 1-(5-phospho-beta-D-ribosyl)-ATP + diphosphate = 5-phospho-alpha-D-ribose 1-diphosphate + ATP. It functions in the pathway amino-acid biosynthesis; L-histidine biosynthesis; L-histidine from 5-phospho-alpha-D-ribose 1-diphosphate: step 1/9. With respect to regulation, feedback inhibited by histidine. Its function is as follows. Catalyzes the condensation of ATP and 5-phosphoribose 1-diphosphate to form N'-(5'-phosphoribosyl)-ATP (PR-ATP). Has a crucial role in the pathway because the rate of histidine biosynthesis seems to be controlled primarily by regulation of HisG enzymatic activity. The chain is ATP phosphoribosyltransferase from Escherichia coli O7:K1 (strain IAI39 / ExPEC).